The chain runs to 127 residues: uncharacterized protein (127 aa).

3 helical membrane-spanning segments follow: residues 16–36 (AVIG…CYVI), 59–79 (LVGA…SFLF), and 100–120 (IIGF…GGVI).

Its subcellular location is the cell membrane. This is an uncharacterized protein from Methanocaldococcus jannaschii (strain ATCC 43067 / DSM 2661 / JAL-1 / JCM 10045 / NBRC 100440) (Methanococcus jannaschii).